Consider the following 627-residue polypeptide: 1-deoxy-D-xylulose-5-phosphate synthase (627 aa).

Thiamine diphosphate contacts are provided by residues His80 and 121-123 (GHS). Residue Asp152 participates in Mg(2+) binding. Thiamine diphosphate is bound by residues 153–154 (GA), Asn181, Tyr288, and Glu370. Asn181 lines the Mg(2+) pocket.

The protein belongs to the transketolase family. DXPS subfamily. Homodimer. Mg(2+) serves as cofactor. Thiamine diphosphate is required as a cofactor.

The catalysed reaction is D-glyceraldehyde 3-phosphate + pyruvate + H(+) = 1-deoxy-D-xylulose 5-phosphate + CO2. It functions in the pathway metabolic intermediate biosynthesis; 1-deoxy-D-xylulose 5-phosphate biosynthesis; 1-deoxy-D-xylulose 5-phosphate from D-glyceraldehyde 3-phosphate and pyruvate: step 1/1. In terms of biological role, catalyzes the acyloin condensation reaction between C atoms 2 and 3 of pyruvate and glyceraldehyde 3-phosphate to yield 1-deoxy-D-xylulose-5-phosphate (DXP). In Aliivibrio fischeri (strain ATCC 700601 / ES114) (Vibrio fischeri), this protein is 1-deoxy-D-xylulose-5-phosphate synthase.